The primary structure comprises 247 residues: 6-phosphogluconolactonase (247 aa).

This sequence belongs to the glucosamine/galactosamine-6-phosphate isomerase family. 6-phosphogluconolactonase subfamily.

It carries out the reaction 6-phospho-D-glucono-1,5-lactone + H2O = 6-phospho-D-gluconate + H(+). It functions in the pathway carbohydrate degradation; pentose phosphate pathway; D-ribulose 5-phosphate from D-glucose 6-phosphate (oxidative stage): step 2/3. Hydrolysis of 6-phosphogluconolactone to 6-phosphogluconate. The chain is 6-phosphogluconolactonase (pgl) from Mycobacterium leprae (strain TN).